A 379-amino-acid chain; its full sequence is Alkanesulfonate monooxygenase (379 aa).

This sequence belongs to the SsuD family.

It carries out the reaction an alkanesulfonate + FMNH2 + O2 = an aldehyde + FMN + sulfite + H2O + 2 H(+). Its function is as follows. Catalyzes the desulfonation of aliphatic sulfonates. This chain is Alkanesulfonate monooxygenase, found in Sorangium cellulosum (strain So ce56) (Polyangium cellulosum (strain So ce56)).